A 193-amino-acid chain; its full sequence is MPVWGGGNKCGACGRTVYHAEEVQCDGRSFHRCCFLCMVCRKNLDSTTVAIHDEEIYCKSCYGKKYGPKGYGYGQGAGTLNMDRGERLGIKPESVQPHRPTTNPNTSKFAQKYGGAEKCSRCGDSVYAAEKIIGAGKPWHKNCFRCAKCGKSLESTTLTEKEGEIYCKGCYAKNFGPKGFGYGQGAGALVHAQ.

Positions 10–61 (CGACGRTVYHAEEVQCDGRSFHRCCFLCMVCRKNLDSTTVAIHDEEIYCKSC) constitute an LIM zinc-binding 1 domain. A Nuclear localization signal motif is present at residues 64–69 (KKYGPK). A Glycyl lysine isopeptide (Lys-Gly) (interchain with G-Cter in SUMO2) cross-link involves residue lysine 91. 2 positions are modified to N6-acetyllysine: lysine 112 and lysine 131. The 52-residue stretch at 119-170 (CSRCGDSVYAAEKIIGAGKPWHKNCFRCAKCGKSLESTTLTEKEGEIYCKGC) folds into the LIM zinc-binding 2 domain. N6-acetyllysine; alternate is present on lysine 137. Lysine 137 is modified (N6-succinyllysine; alternate). Position 161 is an N6-acetyllysine (lysine 161).

As to quaternary structure, interacts with KAT14. The LIM domain 1 is necessary and sufficient for this interaction. Interacts with GLRX3.

It is found in the nucleus. Its function is as follows. Drastically down-regulated in response to PDGF-BB or cell injury, that promote smooth muscle cell proliferation and dedifferentiation. Seems to play a role in the development of the embryonic vascular system. The sequence is that of Cysteine and glycine-rich protein 2 (CSRP2) from Bos taurus (Bovine).